A 386-amino-acid chain; its full sequence is L-prolyl-[peptidyl-carrier protein] dehydrogenase (386 aa).

Residues 125 to 134 (NAATEPDAGS) and 158 to 160 (FIT) each bind FAD. Catalysis depends on Glu244, which acts as the Proton acceptor. FAD is bound by residues Arg270, Gln281, 338-342 (QTFGG), and 367-369 (TND).

It belongs to the acyl-CoA dehydrogenase family. Requires FAD as cofactor.

It carries out the reaction L-prolyl-[peptidyl-carrier protein] + 2 oxidized [electron-transfer flavoprotein] + H(+) = (1H-pyrrole-2-carbonyl)-[peptidyl-carrier protein] + 2 reduced [electron-transfer flavoprotein]. It participates in antibiotic biosynthesis; prodigiosin biosynthesis. Its function is as follows. Involved in the biosynthesis of 4-methoxy-2,2'-bipyrrole-5-carbaldehyde (MBC), one of the terminal products involved in the biosynthesis of the red antibiotic prodigiosin (Pig). Catalyzes the desaturation of the L-prolyl-[PigG] to yield 1H-pyrrole-2-carbonyl-[PigG]. This Serratia sp. (strain ATCC 39006) (Prodigiosinella confusarubida) protein is L-prolyl-[peptidyl-carrier protein] dehydrogenase.